Reading from the N-terminus, the 410-residue chain is Histidine--tRNA ligase (410 aa).

This sequence belongs to the class-II aminoacyl-tRNA synthetase family.

The protein localises to the cytoplasm. It catalyses the reaction tRNA(His) + L-histidine + ATP = L-histidyl-tRNA(His) + AMP + diphosphate + H(+). This Methanoculleus marisnigri (strain ATCC 35101 / DSM 1498 / JR1) protein is Histidine--tRNA ligase.